Reading from the N-terminus, the 133-residue chain is Snaclec purpureotin subunit alpha (133 aa).

Intrachain disulfides connect C2/C13, C30/C127, and C102/C119. A C-type lectin domain is found at 9-128; the sequence is FKQYCYQIIK…CEQKHIFMCK (120 aa).

This sequence belongs to the snaclec family. In terms of assembly, homodimer (non-covalently linked) of heterodimer of alpha and beta subunits (disulfide-linked). In terms of tissue distribution, expressed by the venom gland.

The protein localises to the secreted. Snaclec that induces platelet aggregation without any cofactor in a dose-dependent manner. Its platelet aggregation effect is blocked by echicetin, suggesting it is a GPIb-binding protein which binds to the same or a closely related GPIb site on platelets as echicetin. This is Snaclec purpureotin subunit alpha from Trimeresurus purpureomaculatus (Mangrove pit viper).